The chain runs to 175 residues: Small ribosomal subunit protein uS5 (175 aa).

In terms of domain architecture, S5 DRBM spans 11-74; it reads LSEVLVDVNR…QAAKKRMMKV (64 aa).

This sequence belongs to the universal ribosomal protein uS5 family. As to quaternary structure, part of the 30S ribosomal subunit. Contacts proteins S4 and S8.

Its function is as follows. With S4 and S12 plays an important role in translational accuracy. In terms of biological role, located at the back of the 30S subunit body where it stabilizes the conformation of the head with respect to the body. The protein is Small ribosomal subunit protein uS5 of Rickettsia prowazekii (strain Madrid E).